The primary structure comprises 340 residues: Sesquiterpene synthase 6 (340 aa).

Mg(2+)-binding residues include Asp-90, Asn-229, Ser-233, and Glu-237. Positions 90–94 (DDITD) match the DDXXD motif motif. Positions 229–237 (NDIYSFNNE) match the NSE/DTE motif motif. (2E,6E)-farnesyl diphosphate is bound by residues Arg-316 and Tyr-317.

The protein belongs to the terpene synthase family. Mg(2+) serves as cofactor.

It catalyses the reaction (2E,6E)-farnesyl diphosphate = delta-cadinene + diphosphate. The catalysed reaction is (2E,6E)-farnesyl diphosphate = bicyclogermacrene + diphosphate. Terpene cyclase that catalyzes the cyclization of farnesyl diphosphate (FPP) to various sesquiterpenes, including bicycloelemene, alpha-gurjunene, 9-epi-caryophylene, bicyclosesquiphellandrene, bicyclogermacrene and delta-cadinene. This is Sesquiterpene synthase 6 from Postia placenta (strain ATCC 44394 / Madison 698-R) (Brown rot fungus).